We begin with the raw amino-acid sequence, 326 residues long: MSSFSESALEKKLSELSNSQQSVQTLSLWLIHHRKHAGPIVSVWHRELRKAKSNRKLTFLYLANDVIQNSKRKGPEFTREFESVLVDAFSHVAREADEGCKKPLERLLNIWQERSVYGGEFIQQLKLSMEDSKSPPPKATEEKKSLKRTFQQIQEEEDDDYPGSYSPQDPSAGPLLTEELIKALQDLENAASGDATVRQKIASLPQEVQDVSLLEKITDKEAAERLSKTVDEACLLLAEYNGRLAAELEDRRQLARMLVEYTQNQKDVLSEKEKKLEEYKQKLARVTQVRKELKSHIQSLPDLSLLPNVTGGLAPLPSAGDLFSTD.

Serine 2 bears the N-acetylserine mark. The 132-residue stretch at 2–133 (SSFSESALEK…QLKLSMEDSK (132 aa)) folds into the CID domain. The disordered stretch occupies residues 127–149 (LSMEDSKSPPPKATEEKKSLKRT). A compositionally biased stretch (basic and acidic residues) spans 128–144 (SMEDSKSPPPKATEEKK). Residues serine 132 and serine 134 each carry the phosphoserine modification. Phosphotyrosine is present on tyrosine 161. A phosphoserine mark is found at serine 166 and serine 299.

This sequence belongs to the UPF0400 (RTT103) family. Homodimer. May form a heterodimer with RPRD1A. Associates with RPAP2. Associates with the RNA polymerase II complex. Preferentially expressed in a range of tumor tissues including colon, lung, liver, breast, prostate, stomach, uterine endometrium and cervical cancers with higher levels in tumors than in adjacent non-tumor tissue (at protein level).

It is found in the nucleus. Its function is as follows. Interacts with phosphorylated C-terminal heptapeptide repeat domain (CTD) of the largest RNA polymerase II subunit POLR2A, and participates in dephosphorylation of the CTD by RPAP2. Transcriptional regulator which enhances expression of CCND1. Promotes binding of RNA polymerase II to the CCDN1 promoter and to the termination region before the poly-A site but decreases its binding after the poly-A site. Prevents RNA polymerase II from reading through the 3' end termination site and may allow it to be recruited back to the promoter through promotion of the formation of a chromatin loop. Also enhances the transcription of a number of other cell cycle-related genes including CDK2, CDK4, CDK6 and cyclin-E but not CDKN1A, CDKN1B or cyclin-A. Promotes cell proliferation. The chain is Regulation of nuclear pre-mRNA domain-containing protein 1B (RPRD1B) from Homo sapiens (Human).